The following is a 260-amino-acid chain: Intermembrane phospholipid transport system permease protein MlaE (260 aa).

Over 1 to 50 (MLLNALASLGHKGIKTLRTFGRAGLMLFNALVGKPEFRKHAPLLVRQLYN) the chain is Cytoplasmic. The chain crosses the membrane as a helical span at residues 51 to 71 (VGVLSMLIIVVSGVFIGMVLG). Residues 72–88 (LQGYLVLTTYSAETSLG) lie on the Periplasmic side of the membrane. A helical membrane pass occupies residues 89–109 (MLVALSLLRELGPVVAALLFA). At 110–147 (GRAGSALTAEIGLMRATEQLSSMEMMAVDPLRRVISPR) the chain is on the cytoplasmic side. Residues 148 to 168 (FWAGVISLPLLTVIFVAVGIW) traverse the membrane as a helical segment. Topologically, residues 169–198 (GGSLVGVSWKGIDSGFFWSAMQNAVDWRMD) are periplasmic. Residues 199–219 (LVNCLIKSVVFAITVTWISLF) traverse the membrane as a helical segment. Over 220-238 (NGYDAIPTSAGISRATTRT) the chain is Cytoplasmic. Residues 239–259 (VVHSSLAVLGLDFVLTALMFG) form a helical membrane-spanning segment. Position 260 (N260) is a topological domain, periplasmic.

This sequence belongs to the MlaE permease family. The complex is composed of two ATP-binding proteins (MlaF), two transmembrane proteins (MlaE), two cytoplasmic solute-binding proteins (MlaB) and six periplasmic solute-binding proteins (MlaD).

It is found in the cell inner membrane. Part of the ABC transporter complex MlaFEDB, which is involved in a phospholipid transport pathway that maintains lipid asymmetry in the outer membrane by retrograde trafficking of phospholipids from the outer membrane to the inner membrane. Probably responsible for the translocation of the substrate across the membrane. In Escherichia coli O157:H7, this protein is Intermembrane phospholipid transport system permease protein MlaE.